The following is a 210-amino-acid chain: Fibroblast growth factor 21 (210 aa).

Positions 1-28 (MEWMRSRVGTLGLWVRLLLAVFLLGVYQ) are cleaved as a signal peptide. The tract at residues 144-210 (PLRLPQKDSP…LQGRSPSYAS (67 aa)) is disordered.

Belongs to the heparin-binding growth factors family. In terms of assembly, interacts (via C-terminus) with KLB; this interaction is direct. Interacts with FGFR4. As to expression, most abundantly expressed in the liver, also expressed in the thymus at lower levels. Expressed in skeletal muscle (at protein level). Secreted in plasma (at protein level).

The protein resides in the secreted. In terms of biological role, stimulates glucose uptake in differentiated adipocytes via the induction of glucose transporter SLC2A1/GLUT1 expression (but not SLC2A4/GLUT4 expression). Activity probably requires the presence of KLB. Regulates systemic glucose homeostasis and insulin sensitivity. In Mus musculus (Mouse), this protein is Fibroblast growth factor 21 (Fgf21).